The sequence spans 124 residues: Large ribosomal subunit protein uL22 (124 aa).

The protein belongs to the universal ribosomal protein uL22 family. In terms of assembly, part of the 50S ribosomal subunit.

This protein binds specifically to 23S rRNA; its binding is stimulated by other ribosomal proteins, e.g. L4, L17, and L20. It is important during the early stages of 50S assembly. It makes multiple contacts with different domains of the 23S rRNA in the assembled 50S subunit and ribosome. In terms of biological role, the globular domain of the protein is located near the polypeptide exit tunnel on the outside of the subunit, while an extended beta-hairpin is found that lines the wall of the exit tunnel in the center of the 70S ribosome. This is Large ribosomal subunit protein uL22 from Buchnera aphidicola subsp. Cinara cedri (strain Cc).